A 358-amino-acid chain; its full sequence is Dual-specificity RNA methyltransferase RlmN (358 aa).

Glu91 functions as the Proton acceptor in the catalytic mechanism. Residues 98–335 form the Radical SAM core domain; sequence SQGRITQCLS…AIIRKSKGAD (238 aa). A disulfide bridge connects residues Cys105 and Cys340. Positions 112, 116, and 119 each coordinate [4Fe-4S] cluster. S-adenosyl-L-methionine-binding positions include 164–165, Ser196, 219–221, and Asn295; these read GE and SLH. The active-site S-methylcysteine intermediate is the Cys340.

Belongs to the radical SAM superfamily. RlmN family. The cofactor is [4Fe-4S] cluster.

The protein localises to the cytoplasm. The enzyme catalyses adenosine(2503) in 23S rRNA + 2 reduced [2Fe-2S]-[ferredoxin] + 2 S-adenosyl-L-methionine = 2-methyladenosine(2503) in 23S rRNA + 5'-deoxyadenosine + L-methionine + 2 oxidized [2Fe-2S]-[ferredoxin] + S-adenosyl-L-homocysteine. The catalysed reaction is adenosine(37) in tRNA + 2 reduced [2Fe-2S]-[ferredoxin] + 2 S-adenosyl-L-methionine = 2-methyladenosine(37) in tRNA + 5'-deoxyadenosine + L-methionine + 2 oxidized [2Fe-2S]-[ferredoxin] + S-adenosyl-L-homocysteine. Functionally, specifically methylates position 2 of adenine 2503 in 23S rRNA and position 2 of adenine 37 in tRNAs. m2A2503 modification seems to play a crucial role in the proofreading step occurring at the peptidyl transferase center and thus would serve to optimize ribosomal fidelity. The sequence is that of Dual-specificity RNA methyltransferase RlmN from Oleidesulfovibrio alaskensis (strain ATCC BAA-1058 / DSM 17464 / G20) (Desulfovibrio alaskensis).